We begin with the raw amino-acid sequence, 687 residues long: Putative mitochondrial carnitine O-acetyltransferase (687 aa).

Histidine 346 (proton acceptor) is an active-site residue. CoA is bound at residue 446-459 (GASHIKTVFKCSPD). 2 residues coordinate (R)-carnitine: tyrosine 481 and threonine 494. Serine 517 carries the phosphoserine modification.

The protein belongs to the carnitine/choline acetyltransferase family.

It is found in the mitochondrion inner membrane. The enzyme catalyses (R)-carnitine + acetyl-CoA = O-acetyl-(R)-carnitine + CoA. Its function is as follows. Involved in the transfer of acetyl-CoA into mitochondria. May also be involved in the metabolism of acetate and of ethanol. The chain is Putative mitochondrial carnitine O-acetyltransferase (YAT1) from Saccharomyces cerevisiae (strain ATCC 204508 / S288c) (Baker's yeast).